Reading from the N-terminus, the 207-residue chain is ATP synthase subunit 5, mitochondrial (207 aa).

This sequence belongs to the ATPase delta chain family. F-type ATPases have 2 components, CF(1) - the catalytic core - and CF(0) - the membrane proton channel. CF(1) has five subunits: alpha(3), beta(3), gamma(1), delta(1), epsilon(1). CF(0) has three main subunits: a, b and c.

The protein localises to the mitochondrion. Its subcellular location is the mitochondrion inner membrane. Mitochondrial membrane ATP synthase (F(1)F(0) ATP synthase or Complex V) produces ATP from ADP in the presence of a proton gradient across the membrane which is generated by electron transport complexes of the respiratory chain. F-type ATPases consist of two structural domains, F(1) - containing the extramembraneous catalytic core and F(0) - containing the membrane proton channel, linked together by a central stalk and a peripheral stalk. During catalysis, ATP synthesis in the catalytic domain of F(1) is coupled via a rotary mechanism of the central stalk subunits to proton translocation. Part of the complex F(0) domain and the peripheric stalk, which acts as a stator to hold the catalytic alpha(3)beta(3) subcomplex and subunit a/ATP6 static relative to the rotary elements. In Eremothecium gossypii (strain ATCC 10895 / CBS 109.51 / FGSC 9923 / NRRL Y-1056) (Yeast), this protein is ATP synthase subunit 5, mitochondrial (ATP5).